The chain runs to 76 residues: KANTR integral membrane protein (76 aa).

An N-terminal signal peptide occupies residues 1 to 25; that stretch reads MSPFSLLILVICAFSLFFLINLSRG. The Extracellular segment spans residues 26-34; it reads LSILLVFTK. The helical transmembrane segment at 35–55 threads the bilayer; sequence NQLLALLLLSIVSLFSISLIS. The Cytoplasmic portion of the chain corresponds to 56 to 76; the sequence is ALIFFDLLPSTFFGFILLLFF.

Its subcellular location is the membrane. The protein is KANTR integral membrane protein of Mus musculus (Mouse).